A 259-amino-acid chain; its full sequence is Protein FAM220A (259 aa).

Residues 29-66 (GLKRRSEKRNPSPSDVPSWTDQPVADTHGKSRAMAAAS) form a disordered region. A compositionally biased stretch (polar residues) spans 39–49 (PSPSDVPSWTD).

In terms of assembly, interacts with transcriptional activator STAT3; the interaction occurs in both the nucleus and the cytoplasm, is enhanced by IL6 and promotes STAT3 dephosphorylation, leading to negative regulation of STAT3 transcriptional activator activity. Can interact with both unphosphorylated and phosphorylated STAT3 but interacts preferentially with phosphorylated STAT3 in the nucleus. Interacts with protein phosphatase PTPN2/TC45; this promotes interaction of PTPN2 with STAT3, leading to dephosphorylation of STAT3 by PTPN2.

The protein localises to the nucleus. It is found in the cytoplasm. Its subcellular location is the cytoplasmic vesicle. It localises to the secretory vesicle. The protein resides in the acrosome. In terms of biological role, promotes dephosphorylation of transcriptional activator STAT3 by interacting with both STAT3 and protein phosphatase PTPN2. This promotes interaction of PTPN2 with STAT3 and mediates STAT3 dephosphorylation by PTPN2, leading to negative regulation of STAT3 transcriptional activator activity. May be required for spermiogenesis or sperm function. This chain is Protein FAM220A (Fam220a), found in Rattus norvegicus (Rat).